We begin with the raw amino-acid sequence, 359 residues long: Molybdenum import ATP-binding protein ModC (359 aa).

In terms of domain architecture, ABC transporter spans 1 to 236; sequence MNTEIKARFR…IDLPAAFADD (236 aa). 34 to 41 contributes to the ATP binding site; that stretch reads GHSGSGKT. The region spanning 294–359 is the Mop domain; that stretch reads QSSILNCVSA…AQIKAVALLA (66 aa).

This sequence belongs to the ABC transporter superfamily. Molybdate importer (TC 3.A.1.8) family. The complex is composed of two ATP-binding proteins (ModC), two transmembrane proteins (ModB) and a solute-binding protein (ModA).

The protein localises to the cell inner membrane. The catalysed reaction is molybdate(out) + ATP + H2O = molybdate(in) + ADP + phosphate + H(+). Part of the ABC transporter complex ModABC involved in molybdenum import. Responsible for energy coupling to the transport system. The protein is Molybdenum import ATP-binding protein ModC of Dechloromonas aromatica (strain RCB).